Reading from the N-terminus, the 421-residue chain is Serine--tRNA ligase (421 aa).

229–231 (TSE) provides a ligand contact to L-serine. 260 to 262 (RRE) serves as a coordination point for ATP. An L-serine-binding site is contributed by E283. 347–350 (EISS) is a binding site for ATP. Residue S381 coordinates L-serine.

Belongs to the class-II aminoacyl-tRNA synthetase family. Type-1 seryl-tRNA synthetase subfamily. As to quaternary structure, homodimer. The tRNA molecule binds across the dimer.

Its subcellular location is the cytoplasm. It catalyses the reaction tRNA(Ser) + L-serine + ATP = L-seryl-tRNA(Ser) + AMP + diphosphate + H(+). It carries out the reaction tRNA(Sec) + L-serine + ATP = L-seryl-tRNA(Sec) + AMP + diphosphate + H(+). It participates in aminoacyl-tRNA biosynthesis; selenocysteinyl-tRNA(Sec) biosynthesis; L-seryl-tRNA(Sec) from L-serine and tRNA(Sec): step 1/1. Its function is as follows. Catalyzes the attachment of serine to tRNA(Ser). Is also able to aminoacylate tRNA(Sec) with serine, to form the misacylated tRNA L-seryl-tRNA(Sec), which will be further converted into selenocysteinyl-tRNA(Sec). The chain is Serine--tRNA ligase from Fusobacterium nucleatum subsp. nucleatum (strain ATCC 25586 / DSM 15643 / BCRC 10681 / CIP 101130 / JCM 8532 / KCTC 2640 / LMG 13131 / VPI 4355).